Reading from the N-terminus, the 301-residue chain is Retinochrome (301 aa).

The Extracellular segment spans residues 1 to 17 (MFGNPAMTGLHQFTMWE). A helical transmembrane segment spans residues 18–43 (HYFTGSIYLVLGCVVFSLCGMCIIFL). Residues 44-54 (ARQSPKPRRKY) lie on the Cytoplasmic side of the membrane. A helical membrane pass occupies residues 55–76 (AILIHVLITAMAVNGGDPAHAS). Topologically, residues 77 to 94 (SSIVGRWLYGSVGCQLMG) are extracellular. A helical membrane pass occupies residues 95-120 (FWGFFGGMSHIWMLFAFAMERYMAVC). At 121-132 (HREFYQQMPSVY) the chain is on the cytoplasmic side. The chain crosses the membrane as a helical span at residues 133–153 (YSIIVGLMYTFGTFWATMPLL). Topologically, residues 154 to 180 (GWASYGLEVHGTSCTINYSVSDESYQS) are extracellular. Asparagine 170 is a glycosylation site (N-linked (GlcNAc...) asparagine). Residues 181–208 (YVFFLAIFSFIFPMVSGWYAISKAWSGL) traverse the membrane as a helical segment. The Cytoplasmic segment spans residues 209–230 (SAIPDAEKEKDKDILSEEQLTA). A helical membrane pass occupies residues 231-255 (LAGAFILISLISWSGFGYVAIYSAL). Residues 256–264 (THGGAQLSH) are Extracellular-facing. The chain crosses the membrane as a helical span at residues 265-289 (LRGHVPPIMSKTGCALFPLLIFLLT). Lysine 275 is subject to N6-(retinylidene)lysine. The Cytoplasmic segment spans residues 290–301 (ARSLPKSDTKKP).

It belongs to the G-protein coupled receptor 1 family. Opsin subfamily. As to expression, mainly stored in myeloid bodies of the inner segments.

The protein resides in the membrane. Retinochrome is capable of acting as an effective catalyst in the light to convert various isomers of retinal into 11-cis, the form that is required by opsin to resynthesize rhodopsin. This is Retinochrome from Todarodes pacificus (Japanese flying squid).